The primary structure comprises 442 residues: tRNA-2-methylthio-N(6)-dimethylallyladenosine synthase (442 aa).

The 119-residue stretch at 2–120 (KKVFIRTFGC…LPKMIVDKET (119 aa)) folds into the MTTase N-terminal domain. Cysteine 11, cysteine 49, cysteine 83, cysteine 157, cysteine 161, and cysteine 164 together coordinate [4Fe-4S] cluster. The Radical SAM core domain maps to 143 to 375 (RVEGGAAFVS…NEVIEAETAR (233 aa)). In terms of domain architecture, TRAM spans 378 to 441 (QTMIGTVQRC…TFSLRGKIVE (64 aa)).

This sequence belongs to the methylthiotransferase family. MiaB subfamily. Monomer. Requires [4Fe-4S] cluster as cofactor.

It localises to the cytoplasm. It catalyses the reaction N(6)-dimethylallyladenosine(37) in tRNA + (sulfur carrier)-SH + AH2 + 2 S-adenosyl-L-methionine = 2-methylsulfanyl-N(6)-dimethylallyladenosine(37) in tRNA + (sulfur carrier)-H + 5'-deoxyadenosine + L-methionine + A + S-adenosyl-L-homocysteine + 2 H(+). In terms of biological role, catalyzes the methylthiolation of N6-(dimethylallyl)adenosine (i(6)A), leading to the formation of 2-methylthio-N6-(dimethylallyl)adenosine (ms(2)i(6)A) at position 37 in tRNAs that read codons beginning with uridine. The sequence is that of tRNA-2-methylthio-N(6)-dimethylallyladenosine synthase from Neisseria gonorrhoeae (strain ATCC 700825 / FA 1090).